Here is a 156-residue protein sequence, read N- to C-terminus: Cyclin-dependent protein kinase inhibitor SMR10 (156 aa).

Residues 52–90 (QDQDLEPKSQETNNCSRKEGATVKKEEEEEDDYCKTPTR) form a disordered region. The span at 67-77 (SRKEGATVKKE) shows a compositional bias: basic and acidic residues.

Its function is as follows. Probable cyclin-dependent protein kinase (CDK) inhibitor that functions as a repressor of mitosis in the endoreduplication cell cycle. This Arabidopsis thaliana (Mouse-ear cress) protein is Cyclin-dependent protein kinase inhibitor SMR10.